We begin with the raw amino-acid sequence, 414 residues long: Gamma-glutamyl phosphate reductase (414 aa).

It belongs to the gamma-glutamyl phosphate reductase family.

The protein resides in the cytoplasm. It catalyses the reaction L-glutamate 5-semialdehyde + phosphate + NADP(+) = L-glutamyl 5-phosphate + NADPH + H(+). The protein operates within amino-acid biosynthesis; L-proline biosynthesis; L-glutamate 5-semialdehyde from L-glutamate: step 2/2. Functionally, catalyzes the NADPH-dependent reduction of L-glutamate 5-phosphate into L-glutamate 5-semialdehyde and phosphate. The product spontaneously undergoes cyclization to form 1-pyrroline-5-carboxylate. This chain is Gamma-glutamyl phosphate reductase, found in Limosilactobacillus reuteri (strain DSM 20016) (Lactobacillus reuteri).